A 384-amino-acid chain; its full sequence is Putative glutamate--cysteine ligase 2-2 (384 aa).

The protein belongs to the glutamate--cysteine ligase type 2 family. YbdK subfamily.

It catalyses the reaction L-cysteine + L-glutamate + ATP = gamma-L-glutamyl-L-cysteine + ADP + phosphate + H(+). ATP-dependent carboxylate-amine ligase which exhibits weak glutamate--cysteine ligase activity. The polypeptide is Putative glutamate--cysteine ligase 2-2 (Rubrobacter xylanophilus (strain DSM 9941 / JCM 11954 / NBRC 16129 / PRD-1)).